A 121-amino-acid polypeptide reads, in one-letter code: Large ribosomal subunit protein bL19 (121 aa).

Belongs to the bacterial ribosomal protein bL19 family.

Functionally, this protein is located at the 30S-50S ribosomal subunit interface and may play a role in the structure and function of the aminoacyl-tRNA binding site. This Chlorobium phaeobacteroides (strain BS1) protein is Large ribosomal subunit protein bL19.